A 338-amino-acid polypeptide reads, in one-letter code: Glycerol-3-phosphate dehydrogenase [NAD(P)+] (338 aa).

4 residues coordinate NADPH: serine 14, tyrosine 15, histidine 35, and lysine 109. Sn-glycerol 3-phosphate contacts are provided by lysine 109, glycine 138, and threonine 140. Alanine 142 provides a ligand contact to NADPH. Positions 194, 247, 257, 258, and 259 each coordinate sn-glycerol 3-phosphate. Lysine 194 acts as the Proton acceptor in catalysis. Arginine 258 contacts NADPH. NADPH contacts are provided by valine 282 and glutamate 284.

It belongs to the NAD-dependent glycerol-3-phosphate dehydrogenase family.

The protein localises to the cytoplasm. The enzyme catalyses sn-glycerol 3-phosphate + NAD(+) = dihydroxyacetone phosphate + NADH + H(+). The catalysed reaction is sn-glycerol 3-phosphate + NADP(+) = dihydroxyacetone phosphate + NADPH + H(+). The protein operates within membrane lipid metabolism; glycerophospholipid metabolism. Its function is as follows. Catalyzes the reduction of the glycolytic intermediate dihydroxyacetone phosphate (DHAP) to sn-glycerol 3-phosphate (G3P), the key precursor for phospholipid synthesis. The sequence is that of Glycerol-3-phosphate dehydrogenase [NAD(P)+] from Shewanella putrefaciens (strain CN-32 / ATCC BAA-453).